The sequence spans 274 residues: Large ribosomal subunit protein uL2 (274 aa).

The interval 200–274 (HALEKSGKAG…SKYIIERRKK (75 aa)) is disordered. Basic residues-rich tracts occupy residues 207 to 220 (KAGRSRWLGRRPRN) and 255 to 274 (LKTRAPKKHSSKYIIERRKK).

The protein belongs to the universal ribosomal protein uL2 family. As to quaternary structure, part of the 50S ribosomal subunit. Forms a bridge to the 30S subunit in the 70S ribosome.

In terms of biological role, one of the primary rRNA binding proteins. Required for association of the 30S and 50S subunits to form the 70S ribosome, for tRNA binding and peptide bond formation. It has been suggested to have peptidyltransferase activity; this is somewhat controversial. Makes several contacts with the 16S rRNA in the 70S ribosome. This Parabacteroides distasonis (strain ATCC 8503 / DSM 20701 / CIP 104284 / JCM 5825 / NCTC 11152) protein is Large ribosomal subunit protein uL2.